A 322-amino-acid polypeptide reads, in one-letter code: UDP-N-acetylenolpyruvoylglucosamine reductase (322 aa).

The FAD-binding PCMH-type domain maps to 36 to 202 (RAGGPAQVLF…TSVLFEGVPG (167 aa)). R182 is an active-site residue. The Proton donor role is filled by S231. E301 is a catalytic residue.

Belongs to the MurB family. The cofactor is FAD.

It localises to the cytoplasm. It catalyses the reaction UDP-N-acetyl-alpha-D-muramate + NADP(+) = UDP-N-acetyl-3-O-(1-carboxyvinyl)-alpha-D-glucosamine + NADPH + H(+). The protein operates within cell wall biogenesis; peptidoglycan biosynthesis. Its function is as follows. Cell wall formation. The polypeptide is UDP-N-acetylenolpyruvoylglucosamine reductase (Brucella abortus (strain S19)).